A 347-amino-acid polypeptide reads, in one-letter code: Uroporphyrinogen decarboxylase (347 aa).

Substrate-binding positions include 36 to 40 (RQAGR), aspartate 86, tyrosine 160, serine 212, and histidine 326.

Belongs to the uroporphyrinogen decarboxylase family. In terms of assembly, homodimer.

It is found in the cytoplasm. It carries out the reaction uroporphyrinogen III + 4 H(+) = coproporphyrinogen III + 4 CO2. It functions in the pathway porphyrin-containing compound metabolism; protoporphyrin-IX biosynthesis; coproporphyrinogen-III from 5-aminolevulinate: step 4/4. In terms of biological role, catalyzes the decarboxylation of four acetate groups of uroporphyrinogen-III to yield coproporphyrinogen-III. In Wolbachia sp. subsp. Brugia malayi (strain TRS), this protein is Uroporphyrinogen decarboxylase.